We begin with the raw amino-acid sequence, 1596 residues long: Cellulose synthase 2 (1596 aa).

The catalytic stretch occupies residues 1 to 749; it reads MIYRAILKRL…RSARHGATAS (749 aa). Helical transmembrane passes span 25–45 and 106–126; these read SPFV…GVTI and LSLL…LSYF. Residues 145–238 are catalytic subdomain A; the sequence is DWPVVDVYVP…YVVIFDCDHI (94 aa). Residue Asp187 is part of the active site. The substrate site is built by Asp234 and Asp236. Residues 315–375 form a catalytic subdomain B region; it reads SAVLGIGGFA…GQRVRWARGM (61 aa). Residue Asp331 is part of the active site. Helical transmembrane passes span 396-416, 421-441, 505-525, and 544-564; these read LCYL…VFLA, FLFL…VYAF, FDLN…LALV, and FALN…SIAV. Positions 570 to 669 constitute a PilZ domain; the sequence is QIRHKPRVRA…ERQIVEFMFG (100 aa). The cyclic di-GMP binding domain stretch occupies residues 750–1596; sequence LIVLLGLPAA…RVKDTTDASH (847 aa). Disordered regions lie at residues 769–812 and 828–868; these read SRAT…IAPA and TGPA…APPI. Residues 783 to 809 show a composition bias toward pro residues; sequence VEPPPVNAPPPPSLPQPPGTLPTPPQI. Residues 1553–1573 form a helical membrane-spanning segment; sequence LTLYVLGLVGAGLVAAAAVRL.

The protein in the N-terminal section; belongs to the glycosyltransferase 2 family. It in the C-terminal section; belongs to the AcsB/BcsB family.

Its subcellular location is the cell inner membrane. It carries out the reaction [(1-&gt;4)-beta-D-glucosyl](n) + UDP-alpha-D-glucose = [(1-&gt;4)-beta-D-glucosyl](n+1) + UDP + H(+). This Novacetimonas hansenii (Komagataeibacter hansenii) protein is Cellulose synthase 2 (acsAII).